Consider the following 360-residue polypeptide: Heme A synthase (360 aa).

Transmembrane regions (helical) follow at residues 13–33, 99–119, 129–149, 160–180, and 199–219; these read AVRW…LVGG, LLGR…LWRG, LWLL…MVAS, YRLA…VWTV, and SALL…VAGL. His-263 provides a ligand contact to heme. Transmembrane regions (helical) follow at residues 265-282, 292-312, and 315-335; these read MTAY…FDAV, GALW…LTLL, and VPIG…TLAV. Residue His-323 participates in heme binding.

Belongs to the COX15/CtaA family. Type 2 subfamily. In terms of assembly, interacts with CtaB. It depends on heme b as a cofactor.

Its subcellular location is the cell membrane. The enzyme catalyses Fe(II)-heme o + 2 A + H2O = Fe(II)-heme a + 2 AH2. It functions in the pathway porphyrin-containing compound metabolism; heme A biosynthesis; heme A from heme O: step 1/1. Functionally, catalyzes the conversion of heme O to heme A by two successive hydroxylations of the methyl group at C8. The first hydroxylation forms heme I, the second hydroxylation results in an unstable dihydroxymethyl group, which spontaneously dehydrates, resulting in the formyl group of heme A. The sequence is that of Heme A synthase from Bradyrhizobium diazoefficiens (strain JCM 10833 / BCRC 13528 / IAM 13628 / NBRC 14792 / USDA 110).